Here is a 307-residue protein sequence, read N- to C-terminus: GMP synthase [glutamine-hydrolyzing] subunit B (307 aa).

A GMPS ATP-PPase domain is found at 1-184 (MWENFIEEKV…LGLPEKIYNR (184 aa)). ATP is bound at residue 27 to 33 (SGGVDSS).

In terms of assembly, heterodimer composed of a glutamine amidotransferase subunit (A) and a GMP-binding subunit (B).

It carries out the reaction XMP + L-glutamine + ATP + H2O = GMP + L-glutamate + AMP + diphosphate + 2 H(+). It participates in purine metabolism; GMP biosynthesis; GMP from XMP (L-Gln route): step 1/1. Functionally, catalyzes the synthesis of GMP from XMP. This is GMP synthase [glutamine-hydrolyzing] subunit B from Thermococcus kodakarensis (strain ATCC BAA-918 / JCM 12380 / KOD1) (Pyrococcus kodakaraensis (strain KOD1)).